The sequence spans 174 residues: ATP-dependent protease subunit HslV (174 aa).

Thr2 is a catalytic residue. Na(+) contacts are provided by Gly157, Cys160, and Thr163.

Belongs to the peptidase T1B family. HslV subfamily. As to quaternary structure, a double ring-shaped homohexamer of HslV is capped on each side by a ring-shaped HslU homohexamer. The assembly of the HslU/HslV complex is dependent on binding of ATP.

The protein resides in the cytoplasm. It carries out the reaction ATP-dependent cleavage of peptide bonds with broad specificity.. With respect to regulation, allosterically activated by HslU binding. Its function is as follows. Protease subunit of a proteasome-like degradation complex believed to be a general protein degrading machinery. The chain is ATP-dependent protease subunit HslV from Yersinia enterocolitica serotype O:8 / biotype 1B (strain NCTC 13174 / 8081).